Reading from the N-terminus, the 265-residue chain is Uridylate kinase (265 aa).

Positions 1-29 (MTESREPHVAGSAAPRPEPANGLASGQPS) are disordered. 40 to 43 (KLGG) lines the ATP pocket. Gly-81 is a UMP binding site. ATP-binding residues include Gly-82 and Arg-86. UMP contacts are provided by residues Asp-101 and 162–169 (MGLPYFST). Residues Phe-195 and Asp-198 each contribute to the ATP site.

It belongs to the UMP kinase family. As to quaternary structure, homohexamer.

The protein localises to the cytoplasm. It catalyses the reaction UMP + ATP = UDP + ADP. The protein operates within pyrimidine metabolism; CTP biosynthesis via de novo pathway; UDP from UMP (UMPK route): step 1/1. With respect to regulation, inhibited by UTP. Functionally, catalyzes the reversible phosphorylation of UMP to UDP. This Mycolicibacterium paratuberculosis (strain ATCC BAA-968 / K-10) (Mycobacterium paratuberculosis) protein is Uridylate kinase.